Reading from the N-terminus, the 290-residue chain is Cilia- and flagella-associated protein 298 (290 aa).

This sequence belongs to the CFAP298 family. In terms of assembly, interacts with dnaaf1/swt. Interacts with lrrc6/sea. Interacts with dvl (via DEP and PDZ domains). In terms of tissue distribution, strongly expressed in ciliated tissues of the embryonic trunk, including the pronephric ducts and spinal canal.

It localises to the cytoplasm. It is found in the cytoskeleton. Its subcellular location is the cilium basal body. Functionally, plays a role in motile cilium function, possibly by acting on outer dynein arm assembly. Seems to be important for initiation rather than maintenance of cilium motility. Required for correct positioning of cilia at the apical cell surface, suggesting an additional role in the planar cell polarity (PCP) pathway. May suppress canonical Wnt signaling activity. The polypeptide is Cilia- and flagella-associated protein 298 (Danio rerio (Zebrafish)).